Reading from the N-terminus, the 918-residue chain is Isoleucine--tRNA ligase (918 aa).

Positions 57–67 match the 'HIGH' region motif; that stretch reads PYANGDIHIGH. Glutamate 568 contacts L-isoleucyl-5'-AMP. Residues 609 to 613 carry the 'KMSKS' region motif; that stretch reads KMSKS. Lysine 612 provides a ligand contact to ATP. Residues cysteine 894, cysteine 897, cysteine 909, and cysteine 912 each contribute to the Zn(2+) site.

It belongs to the class-I aminoacyl-tRNA synthetase family. IleS type 1 subfamily. As to quaternary structure, monomer. Zn(2+) serves as cofactor.

It is found in the cytoplasm. It catalyses the reaction tRNA(Ile) + L-isoleucine + ATP = L-isoleucyl-tRNA(Ile) + AMP + diphosphate. In terms of biological role, catalyzes the attachment of isoleucine to tRNA(Ile). As IleRS can inadvertently accommodate and process structurally similar amino acids such as valine, to avoid such errors it has two additional distinct tRNA(Ile)-dependent editing activities. One activity is designated as 'pretransfer' editing and involves the hydrolysis of activated Val-AMP. The other activity is designated 'posttransfer' editing and involves deacylation of mischarged Val-tRNA(Ile). In Sulfurovum sp. (strain NBC37-1), this protein is Isoleucine--tRNA ligase.